Reading from the N-terminus, the 162-residue chain is Calcium-binding protein 4b (162 aa).

4 consecutive EF-hand domains span residues 10 to 45 (ELTN…CKYP), 46 to 81 (NPTL…DYII), 85 to 120 (TCLK…SGSN), and 123 to 158 (QAKV…YFEI). Aspartate 23, asparagine 25, aspartate 27, glutamine 29, glutamate 34, aspartate 59, aspartate 61, aspartate 63, lysine 65, and glutamate 70 together coordinate Ca(2+). Residues aspartate 136, aspartate 138, aspartate 140, cysteine 142, and glutamate 147 each coordinate Ca(2+).

This Dictyostelium discoideum (Social amoeba) protein is Calcium-binding protein 4b (cbpD2).